The following is an 808-amino-acid chain: Phenylalanine--tRNA ligase beta subunit (808 aa).

Residues 40-149 (RPELDFVKIV…DQAEVGKTIR (110 aa)) enclose the tRNA-binding domain. One can recognise a B5 domain in the interval 407–484 (HKEVRIHTDI…RTKGYDTIQV (78 aa)). Mg(2+) contacts are provided by Asp-462, Asp-468, Glu-471, and Glu-472. An FDX-ACB domain is found at 716–808 (SQFPEAEIDL…LAGKNGFVLR (93 aa)).

This sequence belongs to the phenylalanyl-tRNA synthetase beta subunit family. Type 1 subfamily. Tetramer of two alpha and two beta subunits. It depends on Mg(2+) as a cofactor.

The protein resides in the cytoplasm. The catalysed reaction is tRNA(Phe) + L-phenylalanine + ATP = L-phenylalanyl-tRNA(Phe) + AMP + diphosphate + H(+). The sequence is that of Phenylalanine--tRNA ligase beta subunit from Leptospira interrogans serogroup Icterohaemorrhagiae serovar Lai (strain 56601).